The chain runs to 108 residues: Putative pterin-4-alpha-carbinolamine dehydratase (108 aa).

The protein belongs to the pterin-4-alpha-carbinolamine dehydratase family.

The catalysed reaction is (4aS,6R)-4a-hydroxy-L-erythro-5,6,7,8-tetrahydrobiopterin = (6R)-L-erythro-6,7-dihydrobiopterin + H2O. The sequence is that of Putative pterin-4-alpha-carbinolamine dehydratase from Chromobacterium violaceum (strain ATCC 12472 / DSM 30191 / JCM 1249 / CCUG 213 / NBRC 12614 / NCIMB 9131 / NCTC 9757 / MK).